The chain runs to 752 residues: Photosystem I P700 chlorophyll a apoprotein A1 (752 aa).

Helical transmembrane passes span 73-96, 159-182, 198-222, 294-312, 349-372, 388-414, 436-458, and 533-551; these read IFSA…FHGA, LYVT…FHYH, LNHH…HVSA, IAHH…GHQY, WHAQ…HHMY, LCIF…IFMV, AIIS…LYIH, and FLIH…LILL. Residues Cys575 and Cys584 each contribute to the [4Fe-4S] cluster site. Helical transmembrane passes span 591–612 and 666–688; these read HVFL…HFSW and LSAY…MFLF. His677 is a chlorophyll a' binding site. Chlorophyll a contacts are provided by Met685 and Tyr693. Trp694 lines the phylloquinone pocket. A helical transmembrane segment spans residues 726–746; the sequence is AVGVAHYLLGGIATTWAFFHA.

The protein belongs to the PsaA/PsaB family. As to quaternary structure, the PsaA/B heterodimer binds the P700 chlorophyll special pair and subsequent electron acceptors. PSI consists of a core antenna complex that captures photons, and an electron transfer chain that converts photonic excitation into a charge separation. The cyanobacterial PSI reaction center is composed of one copy each of PsaA,B,C,D,E,F,I,J,K,L,M and X, and forms trimeric complexes. It depends on PSI electron transfer chain: 5 chlorophyll a, 1 chlorophyll a', 2 phylloquinones and 3 4Fe-4S clusters. PSI core antenna: 90 chlorophyll a, 22 carotenoids, 3 phospholipids and 1 galactolipid. P700 is a chlorophyll a/chlorophyll a' dimer, A0 is one or more chlorophyll a, A1 is one or both phylloquinones and FX is a shared 4Fe-4S iron-sulfur center. as a cofactor.

It localises to the cellular thylakoid membrane. The enzyme catalyses reduced [plastocyanin] + hnu + oxidized [2Fe-2S]-[ferredoxin] = oxidized [plastocyanin] + reduced [2Fe-2S]-[ferredoxin]. Its function is as follows. PsaA and PsaB bind P700, the primary electron donor of photosystem I (PSI), as well as the electron acceptors A0, A1 and FX. PSI is a plastocyanin/cytochrome c6-ferredoxin oxidoreductase, converting photonic excitation into a charge separation, which transfers an electron from the donor P700 chlorophyll pair to the spectroscopically characterized acceptors A0, A1, FX, FA and FB in turn. Oxidized P700 is reduced on the lumenal side of the thylakoid membrane by plastocyanin or cytochrome c6. This Nostoc punctiforme (strain ATCC 29133 / PCC 73102) protein is Photosystem I P700 chlorophyll a apoprotein A1.